The sequence spans 478 residues: Succinyl-CoA:acetate/propanoyl-CoA:succinate CoA transferase (478 aa).

A mitochondrion-targeting transit peptide spans 1–30 (MYQLAFLRCRYASPIVREARRAFHASRKCQ). Residue 256-260 (GIGAI) coordinates CoA. Catalysis depends on glutamate 279, which acts as the 5-glutamyl coenzyme A thioester intermediate. Residues isoleucine 354, glycine 377, and lysine 404 each contribute to the CoA site.

It belongs to the acetyl-CoA hydrolase/transferase family.

It localises to the mitochondrion. The catalysed reaction is succinyl-CoA + acetate = succinate + acetyl-CoA. It carries out the reaction propanoyl-CoA + succinate = propanoate + succinyl-CoA. Its function is as follows. Transferase involved in anaerobic fumarate-respiration in the mitochondria. Catalyzes the transfer of the CoA moiety of acetyl-CoA or propionyl-CoA to succinate, thereby forming acetate and propionate, respectively. Acetate and propionate are the two major metabolic end products in the anaerobic mitochondrial metabolism of F.hepatica. Also displays CoA transferase activities from acetyl-CoA to propionate, acetate and butyrate. This chain is Succinyl-CoA:acetate/propanoyl-CoA:succinate CoA transferase, found in Fasciola hepatica (Liver fluke).